Reading from the N-terminus, the 181-residue chain is Ribulose bisphosphate carboxylase small subunit, chloroplastic 2 (181 aa).

The transit peptide at 1–57 directs the protein to the chloroplast; the sequence is MAFLIMSSAAAVATGTNAAQASMIAPFTGLKSATSFPVSRKQNLDITSIASNGGRVQ.

Belongs to the RuBisCO small chain family. As to quaternary structure, heterohexadecamer of 8 large and 8 small subunits.

The protein resides in the plastid. It localises to the chloroplast. Functionally, ruBisCO catalyzes two reactions: the carboxylation of D-ribulose 1,5-bisphosphate, the primary event in carbon dioxide fixation, as well as the oxidative fragmentation of the pentose substrate. Both reactions occur simultaneously and in competition at the same active site. Although the small subunit is not catalytic it is essential for maximal activity. The protein is Ribulose bisphosphate carboxylase small subunit, chloroplastic 2 of Nicotiana sylvestris (Wood tobacco).